Reading from the N-terminus, the 354-residue chain is Uroporphyrinogen decarboxylase (354 aa).

Substrate-binding positions include 27-31 (RQAGR), Asp-77, Tyr-154, Thr-209, and His-327.

The protein belongs to the uroporphyrinogen decarboxylase family. Homodimer.

The protein resides in the cytoplasm. It carries out the reaction uroporphyrinogen III + 4 H(+) = coproporphyrinogen III + 4 CO2. Its pathway is porphyrin-containing compound metabolism; protoporphyrin-IX biosynthesis; coproporphyrinogen-III from 5-aminolevulinate: step 4/4. Catalyzes the decarboxylation of four acetate groups of uroporphyrinogen-III to yield coproporphyrinogen-III. The polypeptide is Uroporphyrinogen decarboxylase (Actinobacillus succinogenes (strain ATCC 55618 / DSM 22257 / CCUG 43843 / 130Z)).